Here is a 481-residue protein sequence, read N- to C-terminus: Cysteine--tRNA ligase (481 aa).

Cys43 is a Zn(2+) binding site. Positions 45-55 match the 'HIGH' region motif; sequence ATVQGLPHIGH. 3 residues coordinate Zn(2+): Cys221, His246, and Glu250. Residues 277–281 carry the 'KMSKS' region motif; it reads KMSKS. Position 280 (Lys280) interacts with ATP.

The protein belongs to the class-I aminoacyl-tRNA synthetase family. Monomer. Requires Zn(2+) as cofactor.

It localises to the cytoplasm. The enzyme catalyses tRNA(Cys) + L-cysteine + ATP = L-cysteinyl-tRNA(Cys) + AMP + diphosphate. The chain is Cysteine--tRNA ligase from Mycobacterium sp. (strain JLS).